Consider the following 408-residue polypeptide: RNA exonuclease 4 (408 aa).

The tract at residues Thr-27 to Met-70 is disordered. Low complexity predominate over residues Ser-40–Arg-55. The Exonuclease domain maps to Gln-131–Arg-292. Residues Pro-310 to Lys-322 are compositionally biased toward basic and acidic residues. A disordered region spans residues Pro-310–Ala-408. Residues Gly-343–Lys-357 show a composition bias toward gly residues. Residues Gln-372 to Ser-384 are compositionally biased toward basic and acidic residues.

The protein belongs to the REXO4 family.

The protein resides in the nucleus. Its function is as follows. Exoribonuclease involved in ribosome biosynthesis. Involved in the processing of ITS1, the internal transcribed spacer localized between the 18S and 5.8S rRNAs. In Cryptococcus neoformans var. neoformans serotype D (strain B-3501A) (Filobasidiella neoformans), this protein is RNA exonuclease 4 (REX4).